Consider the following 207-residue polypeptide: Guanylate kinase (207 aa).

The Guanylate kinase-like domain occupies 5–184 (GNLFIVSAPS…ALADLVAIIR (180 aa)). 12-19 (APSGAGKS) serves as a coordination point for ATP.

The protein belongs to the guanylate kinase family.

It localises to the cytoplasm. It carries out the reaction GMP + ATP = GDP + ADP. Functionally, essential for recycling GMP and indirectly, cGMP. The chain is Guanylate kinase from Shewanella violacea (strain JCM 10179 / CIP 106290 / LMG 19151 / DSS12).